A 227-amino-acid polypeptide reads, in one-letter code: Cytochrome c oxidase subunit 2 (227 aa).

At 1-14 (MAYPFQLGFQDATS) the chain is on the mitochondrial intermembrane side. Residues 15 to 45 (PIMEELLHFHDHTLMIVFLISSLVLYIISLM) form a helical membrane-spanning segment. Over 46–59 (LTTKLTHTSTMDAQ) the chain is Mitochondrial matrix. A helical membrane pass occupies residues 60–87 (EVETIWTILPAIILILIALPSLRILYMM). Residues 88 to 227 (DEINNPSLTV…YFEKWSASML (140 aa)) lie on the Mitochondrial intermembrane side of the membrane. Cu cation is bound by residues His-161, Cys-196, Glu-198, Cys-200, His-204, and Met-207. Position 198 (Glu-198) interacts with Mg(2+). The residue at position 218 (Tyr-218) is a Phosphotyrosine.

It belongs to the cytochrome c oxidase subunit 2 family. As to quaternary structure, component of the cytochrome c oxidase (complex IV, CIV), a multisubunit enzyme composed of 14 subunits. The complex is composed of a catalytic core of 3 subunits MT-CO1, MT-CO2 and MT-CO3, encoded in the mitochondrial DNA, and 11 supernumerary subunits COX4I, COX5A, COX5B, COX6A, COX6B, COX6C, COX7A, COX7B, COX7C, COX8 and NDUFA4, which are encoded in the nuclear genome. The complex exists as a monomer or a dimer and forms supercomplexes (SCs) in the inner mitochondrial membrane with NADH-ubiquinone oxidoreductase (complex I, CI) and ubiquinol-cytochrome c oxidoreductase (cytochrome b-c1 complex, complex III, CIII), resulting in different assemblies (supercomplex SCI(1)III(2)IV(1) and megacomplex MCI(2)III(2)IV(2)). Found in a complex with TMEM177, COA6, COX18, COX20, SCO1 and SCO2. Interacts with TMEM177 in a COX20-dependent manner. Interacts with COX20. Interacts with COX16. Cu cation is required as a cofactor.

The protein resides in the mitochondrion inner membrane. The enzyme catalyses 4 Fe(II)-[cytochrome c] + O2 + 8 H(+)(in) = 4 Fe(III)-[cytochrome c] + 2 H2O + 4 H(+)(out). Component of the cytochrome c oxidase, the last enzyme in the mitochondrial electron transport chain which drives oxidative phosphorylation. The respiratory chain contains 3 multisubunit complexes succinate dehydrogenase (complex II, CII), ubiquinol-cytochrome c oxidoreductase (cytochrome b-c1 complex, complex III, CIII) and cytochrome c oxidase (complex IV, CIV), that cooperate to transfer electrons derived from NADH and succinate to molecular oxygen, creating an electrochemical gradient over the inner membrane that drives transmembrane transport and the ATP synthase. Cytochrome c oxidase is the component of the respiratory chain that catalyzes the reduction of oxygen to water. Electrons originating from reduced cytochrome c in the intermembrane space (IMS) are transferred via the dinuclear copper A center (CU(A)) of subunit 2 and heme A of subunit 1 to the active site in subunit 1, a binuclear center (BNC) formed by heme A3 and copper B (CU(B)). The BNC reduces molecular oxygen to 2 water molecules using 4 electrons from cytochrome c in the IMS and 4 protons from the mitochondrial matrix. The polypeptide is Cytochrome c oxidase subunit 2 (MT-CO2) (Felis catus (Cat)).